Reading from the N-terminus, the 300-residue chain is Fluorinase (300 aa).

S-adenosyl-L-methionine-binding positions include aspartate 16, 21–23 (DDS), tyrosine 77, serine 158, aspartate 211, asparagine 216, 270–271 (SR), and 278–280 (RNA).

This sequence belongs to the SAM hydrolase / SAM-dependent halogenase family. In terms of assembly, homohexamer.

It carries out the reaction fluoride + S-adenosyl-L-methionine = 5'-deoxy-5'-fluoroadenosine + L-methionine. It catalyses the reaction chloride + S-adenosyl-L-methionine = 5'-chloro-5'-deoxyadenosine + L-methionine. With respect to regulation, activity is severely inhibited by 1 mM Cu(2+) or Zn(2+). Catalyzes the formation of a C-F bond by combining S-adenosyl-L-methionine (SAM) and fluoride to generate 5'-fluoro-5'-deoxyadenosine (5'-FDA) and L-methionine. Probably involved in fluoroacetate (FAc) and 4-fluorothreonine (4-FT) biosynthesis. In vitro, can also catalyze the conversion of chloride and SAM to 5'-chloro-5'-deoxyadenosine (5'-CIDA) and L-methionine in the presence of L-amino acid oxidase. In Nocardia brasiliensis (strain ATCC 700358 / HUJEG-1), this protein is Fluorinase.